Reading from the N-terminus, the 512-residue chain is SNF1-related protein kinase catalytic subunit alpha KIN10 (512 aa).

Positions 19–271 (YKLGRTLGIG…IPEIRQHPWF (253 aa)) constitute a Protein kinase domain. Lys20 participates in a covalent cross-link: Glycyl lysine isopeptide (Lys-Gly) (interchain with G-Cter in ubiquitin). Residue 25–33 (LGIGSFGRV) coordinates ATP. Lys34 is covalently cross-linked (Glycyl lysine isopeptide (Lys-Gly) (interchain with G-Cter in SUMO)). ATP is bound at residue Lys48. Lys63 participates in a covalent cross-link: Glycyl lysine isopeptide (Lys-Gly) (interchain with G-Cter in SUMO). Catalysis depends on Asp142, which acts as the Proton acceptor. Ser164 carries the post-translational modification Phosphoserine. Thr175 is modified (phosphothreonine; by GRIK1 or GRIK2). The interval 290–389 (AKKIDEEILQ…GLRSQYPVER (100 aa)) is auto-inhibitory domain (AID). Residues 292-332 (KIDEEILQEVINMGFDRNHLIESLRNRTQNDGTVTYYLILD) enclose the UBA domain. The tract at residues 294 to 512 (DEEILQEVIN…AAFLAQLRVL (219 aa)) is regulatory domain (RD). Ser364 is modified (phosphoserine). A Glycyl lysine isopeptide (Lys-Gly) (interchain with G-Cter in SUMO) cross-link involves residue Lys390. The interval 390–512 (KWALGLQSRA…AAFLAQLRVL (123 aa)) is PPI. Residues 463–511 (AVKSPNVVKFEIQLYKTRDDKYLLDLQRVQGPQFLFLDLCAAFLAQLRV) enclose the KA1 domain.

This sequence belongs to the protein kinase superfamily. CAMK Ser/Thr protein kinase family. SNF1 subfamily. Subunit of a probable heterotrimeric complex consisting of an alpha catalytic (KIN10 or KIN11) subunit, and a beta (KINB) and a gamma (KING or SNF4) non-catalytic regulatory subunits. Interacts with KINB2, KINB3, SNF4 and probably with KINB1 and KING1. Interacts with SKP1/ASK1, PAD1, the N-terminus of PRL1 and the WD40 domain of 5PTase13. Potential subunit of a SCF ubiquitin ligase complex consisting of a SNF1-related protein kinase, SKP1 and CUL1. The association of the SCF complex with the proteasome may be mediated by PAD1 and seems to be inhibited by the interaction with PRL1. Interacts with ATAF1. Interacts with ESD4. Interacts with SCE1. Interacts with FUS3. Interacts with PP2C74. Interacts with CDKE1. Interacts with ABI1 and PP2CA. Interacts with KRP6. Interacts with CIPK14. Interacts with FLZ proteins through their FLZ-type zinc finger domains. Interacts with GEBP/STKR1. Interacts with MYC2. Interacts with IDD8. Interacts with BZIP63. Interacts with PTL. Interacts with FLZ3, FLZ9, TCP3, TCP13, HB21/ZHD3 and HB23/ZHD10. Interacts with PTP1. Interacts with RAPTOR1B. Forms oligomers in vitro under strongly reducing conditions. Interacts with WRI1. Interacts with EIN3. Component of a ternary complex composed of BZIP2-BZIP63 heterodimer and KIN10. Interacts with IPK2b. Interacts with FLZ6 and FLZ10. Post-translationally, phosphorylated at Thr-175 in response to glucose. Phosphorylated at Thr-175 under submergence. Autophosphorylated. Dephosphorylated at Thr-175 by ABI1 and PP2CA. Ubiquitinated. Degradation is mediated by a CUL4-based E3 ligase that uses PRL1 as a substrate receptor. In terms of processing, sumoylated by SIZ1. Sumoylated SnRK1 is ubiquitinated and degraded by the proteasome. As to expression, isoform 2 is widely expressed, especially in newly developing tissues. Isoform 2 is expressed throughout the seedling, with highest expression in leaf primordia and vascular tissue, and the seedling root tip. Isoform 2 is later expressed in developing lateral root primordia and developing embryos within siliques. Isoform 1 is widely expressed but at very low levels.

It localises to the plastid. The protein resides in the chloroplast. Its subcellular location is the cytoplasm. It is found in the nucleus. The protein localises to the golgi apparatus. It localises to the endoplasmic reticulum. The catalysed reaction is L-seryl-[protein] + ATP = O-phospho-L-seryl-[protein] + ADP + H(+). The enzyme catalyses L-threonyl-[protein] + ATP = O-phospho-L-threonyl-[protein] + ADP + H(+). Its activity is regulated as follows. Activated by phosphorylation at Thr-175 by GRIK1/SNAK2 and GRIK2/SNAK1. Inactivated by dephosphorylation at Thr-175. Inhibited by trehalose-6-phosphate. Down-regulated by SR45 by affecting its stability. Reduced kinase activity in response to H(2)O(2) treatment. The redox-state of Cys-177 seems to directly influence its kinase activity. Down-regulated by FLZ6 and FLZ10. Functionally, catalytic subunit of the probable trimeric SNF1-related protein kinase (SnRK) complex, a central regulator of cellular energy homeostasis, which, in response to seemingly unrelated darkness, sugar and stress conditions, activates energy-producing pathways and inhibits energy-consuming processes. May play a role in a signal transduction cascade regulating gene expression and carbohydrate metabolism in higher plants. The SnRK complex may also be involved in the regulation of fatty acid synthesis by phosphorylation of acetyl-CoA carboxylase and in assimilation of nitrogen by phosphorylating nitrate reductase. In vitro, KIN10 exhibits kinase activity on sucrose phosphate synthase and the kinase activity is inhibited by PRL1. May be a subunit of a SCF ubiquitin ligase complex and thus be involved in proteasomal ubiquitination. Phosphorylates GRIK1/SNAK2 and GRIK2/SNAK1 in vitro. Cooperates with FUS3 to regulate developmental phase transitions and lateral organ development and act both as positive regulators of abscisic acid (ABA) signaling during germination. Phosphorylates FUS3 in embryo. Negatively modulates MYC2 accumulation through its protein phosphorylation. Phosphorylates geminivirus (CaLCuV, TGMV, ToMoV) AL2 protein resulting in a delay in the viral DNA accumulation and symptom appearance during infection. Regulates bZIP63 activity to alter metabolism in response to starvation through its protein phosphorylation. Under sugar deprivation conditions, antagonizes the IDD8 function in flowering time control by its protein phosphorylation. Plays a cardinal role in the control of cell proliferation through inhibition of KRP6 activity by its protein phosphorylation. Under submergence, phosphorylates PTP1, leading to the release of the MPK6 signaling pathway inhibition. Triggers its own SUMO-mediated proteasomal degradation, establishing a negative feedback loop that attenuates SnRK1 signaling and prevents detrimental hyperactivation of stress responses. Phosphorylates RAPTOR1B in vitro. Phosphorylates and down-regulates HMGR1S in vitro. Kinase activity is redox-sensitive. Acts upstream of TOR in the regulation of autophagy. Required for the activation of autophagy by many abiotic stresses. Involved in positive regulation of autophagy, possibly by affecting the phosphorylation of ATG1 proteins. Negatively modulates WRI1 accumulation through its protein phosphorylation. Modulates leaf senescence progression by the negative regulation of EIN3 accumulation through its protein phosphorylation. Under extended darkness, C/S1-bZIP-SnRK1 complex interacts with the histone acetylation machinery to remodel chromatin and facilitate transcription. BZIP2-BZIP63-KIN10 complex binds to the ETFQO promoter to up-regulate its transcription. Phosphorylates and down-regulates IPK2b in vitro. Involved in the regulation of sucrose-induced hypocotyl elongation under light/dark cycles. The sequence is that of SNF1-related protein kinase catalytic subunit alpha KIN10 from Arabidopsis thaliana (Mouse-ear cress).